We begin with the raw amino-acid sequence, 823 residues long: Leucine--tRNA ligase (823 aa).

Positions 55–65 (PYPSGNLHIGH) match the 'HIGH' region motif. Positions 590-594 (KMSKS) match the 'KMSKS' region motif. An ATP-binding site is contributed by Lys593.

The protein belongs to the class-I aminoacyl-tRNA synthetase family.

Its subcellular location is the cytoplasm. It catalyses the reaction tRNA(Leu) + L-leucine + ATP = L-leucyl-tRNA(Leu) + AMP + diphosphate. This Deinococcus radiodurans (strain ATCC 13939 / DSM 20539 / JCM 16871 / CCUG 27074 / LMG 4051 / NBRC 15346 / NCIMB 9279 / VKM B-1422 / R1) protein is Leucine--tRNA ligase.